We begin with the raw amino-acid sequence, 460 residues long: Bifunctional protein GlmU (460 aa).

A pyrophosphorylase region spans residues 1–235 (MALSAAIILA…PLSVEGVNDR (235 aa)). Residues 9–12 (LAAG), K23, Q76, and 81–82 (GT) each bind UDP-N-acetyl-alpha-D-glucosamine. D109 contributes to the Mg(2+) binding site. Residues G146, E161, N176, and N233 each contribute to the UDP-N-acetyl-alpha-D-glucosamine site. N233 provides a ligand contact to Mg(2+). The linker stretch occupies residues 236-256 (VQLAALAKAHNKRVCEHWMRE). The segment at 257–460 (GVTILDPDTT…VEGWKPEWER (204 aa)) is N-acetyltransferase. UDP-N-acetyl-alpha-D-glucosamine contacts are provided by R338 and K356. The active-site Proton acceptor is the H368. 2 residues coordinate UDP-N-acetyl-alpha-D-glucosamine: Y371 and N382. Residues 391–392 (NY) and A428 contribute to the acetyl-CoA site.

In the N-terminal section; belongs to the N-acetylglucosamine-1-phosphate uridyltransferase family. It in the C-terminal section; belongs to the transferase hexapeptide repeat family. In terms of assembly, homotrimer. Mg(2+) is required as a cofactor.

Its subcellular location is the cytoplasm. It catalyses the reaction alpha-D-glucosamine 1-phosphate + acetyl-CoA = N-acetyl-alpha-D-glucosamine 1-phosphate + CoA + H(+). It carries out the reaction N-acetyl-alpha-D-glucosamine 1-phosphate + UTP + H(+) = UDP-N-acetyl-alpha-D-glucosamine + diphosphate. The protein operates within nucleotide-sugar biosynthesis; UDP-N-acetyl-alpha-D-glucosamine biosynthesis; N-acetyl-alpha-D-glucosamine 1-phosphate from alpha-D-glucosamine 6-phosphate (route II): step 2/2. It participates in nucleotide-sugar biosynthesis; UDP-N-acetyl-alpha-D-glucosamine biosynthesis; UDP-N-acetyl-alpha-D-glucosamine from N-acetyl-alpha-D-glucosamine 1-phosphate: step 1/1. Its pathway is bacterial outer membrane biogenesis; LPS lipid A biosynthesis. Functionally, catalyzes the last two sequential reactions in the de novo biosynthetic pathway for UDP-N-acetylglucosamine (UDP-GlcNAc). The C-terminal domain catalyzes the transfer of acetyl group from acetyl coenzyme A to glucosamine-1-phosphate (GlcN-1-P) to produce N-acetylglucosamine-1-phosphate (GlcNAc-1-P), which is converted into UDP-GlcNAc by the transfer of uridine 5-monophosphate (from uridine 5-triphosphate), a reaction catalyzed by the N-terminal domain. In Bifidobacterium adolescentis (strain ATCC 15703 / DSM 20083 / NCTC 11814 / E194a), this protein is Bifunctional protein GlmU.